Consider the following 556-residue polypeptide: Formate--tetrahydrofolate ligase (556 aa).

Residue 65–72 participates in ATP binding; that stretch reads TPAGEGKT.

It belongs to the formate--tetrahydrofolate ligase family.

The catalysed reaction is (6S)-5,6,7,8-tetrahydrofolate + formate + ATP = (6R)-10-formyltetrahydrofolate + ADP + phosphate. It participates in one-carbon metabolism; tetrahydrofolate interconversion. In Heliobacterium modesticaldum (strain ATCC 51547 / Ice1), this protein is Formate--tetrahydrofolate ligase.